The following is a 582-amino-acid chain: DBIRD complex subunit ZNF326 (582 aa).

Residues 1–124 (MDFEDDYTHS…YRNSLDSFGG (124 aa)) form a mediates transcriptional activation region. 12 positions are modified to phosphoserine: Ser-48, Ser-56, Ser-63, Ser-69, Ser-81, Ser-82, Ser-91, Ser-106, Ser-114, Ser-118, Ser-121, and Ser-137. Lys-140 is covalently cross-linked (Glycyl lysine isopeptide (Lys-Gly) (interchain with G-Cter in SUMO2)). Positions 154–194 (YSSYSSFSSPHMKPAPVGSRGRGTPAYPESTFGSRNYDAFG) are disordered. An Omega-N-methylarginine modification is found at Arg-173. At Ser-212 the chain carries Phosphoserine. The residue at position 235 (Arg-235) is an Omega-N-methylarginine. The Bipartite nuclear localization signal signature appears at 238-260 (KRKMMQPFNKPSGTFIKKPKLAK). Lys-240 participates in a covalent cross-link: Glycyl lysine isopeptide (Lys-Gly) (interchain with G-Cter in SUMO2). Residues 243 to 302 (QPFNKPSGTFIKKPKLAKPMEKISLSKSPTKTDPKNEEEEKRRIEARREKQRRRREKNSE) form a disordered region. Residue Lys-247 is modified to N6-acetyllysine; alternate. A Glycyl lysine isopeptide (Lys-Gly) (interchain with G-Cter in SUMO2); alternate cross-link involves residue Lys-247. A Phosphoserine modification is found at Ser-249. A Phosphothreonine modification is found at Thr-251. Glycyl lysine isopeptide (Lys-Gly) (interchain with G-Cter in SUMO2) cross-links involve residues Lys-254 and Lys-264. Position 270 is a phosphoserine (Ser-270). Residues 272-290 (TKTDPKNEEEEKRRIEARR) are compositionally biased toward basic and acidic residues. The segment at 314–336 (CSFCKFRTFEEKDIELHLESSSH) adopts a C2H2 AKAP95-type 1 zinc-finger fold. Lys-401 participates in a covalent cross-link: Glycyl lysine isopeptide (Lys-Gly) (interchain with G-Cter in SUMO2). The C2H2 AKAP95-type 2 zinc finger occupies 407–430 (CSACSVYIPALHSSVQQHLKSPDH). Residues Lys-459 and Lys-467 each participate in a glycyl lysine isopeptide (Lys-Gly) (interchain with G-Cter in SUMO2) cross-link. The disordered stretch occupies residues 472–582 (FEIQDHSQDQ…DFPVEQPEEN (111 aa)). Residues 483 to 523 (IEGDEEDEEKIDEPIEEEEDEDEEEEAEEVGEVEEVEEVEE) show a composition bias toward acidic residues. Positions 530–545 (EGEGNIQGVGEGGEVG) are enriched in gly residues. Residues 552 to 567 (GVGEVEEVEELEEETA) are compositionally biased toward acidic residues.

Belongs to the AKAP95 family. As to quaternary structure, component of the DBIRD complex. Interacts with CCAR2; the interaction is direct.

The protein localises to the nucleus matrix. Functionally, core component of the DBIRD complex, a multiprotein complex that acts at the interface between core mRNP particles and RNA polymerase II (RNAPII) and integrates transcript elongation with the regulation of alternative splicing: the DBIRD complex affects local transcript elongation rates and alternative splicing of a large set of exons embedded in (A + T)-rich DNA regions. May play a role in neuronal differentiation and is able to bind DNA and activate expression in vitro. In Homo sapiens (Human), this protein is DBIRD complex subunit ZNF326 (ZNF326).